A 142-amino-acid polypeptide reads, in one-letter code: Large ribosomal subunit protein uL11 (142 aa).

The protein belongs to the universal ribosomal protein uL11 family. Part of the ribosomal stalk of the 50S ribosomal subunit. Interacts with L10 and the large rRNA to form the base of the stalk. L10 forms an elongated spine to which L12 dimers bind in a sequential fashion forming a multimeric L10(L12)X complex. One or more lysine residues are methylated.

Its function is as follows. Forms part of the ribosomal stalk which helps the ribosome interact with GTP-bound translation factors. The sequence is that of Large ribosomal subunit protein uL11 from Leptospira borgpetersenii serovar Hardjo-bovis (strain JB197).